We begin with the raw amino-acid sequence, 825 residues long: Phenylalanine--tRNA ligase beta subunit (825 aa).

Residues arginine 39–arginine 154 form the tRNA-binding domain. A B5 domain is found at proline 411 to glutamate 506. Mg(2+)-binding residues include aspartate 484, aspartate 490, glutamate 493, and glutamate 494. Positions serine 731–arginine 824 constitute an FDX-ACB domain.

This sequence belongs to the phenylalanyl-tRNA synthetase beta subunit family. Type 1 subfamily. In terms of assembly, tetramer of two alpha and two beta subunits. It depends on Mg(2+) as a cofactor.

The protein localises to the cytoplasm. The catalysed reaction is tRNA(Phe) + L-phenylalanine + ATP = L-phenylalanyl-tRNA(Phe) + AMP + diphosphate + H(+). This is Phenylalanine--tRNA ligase beta subunit from Synechococcus sp. (strain JA-3-3Ab) (Cyanobacteria bacterium Yellowstone A-Prime).